The chain runs to 417 residues: Diphosphomevalonate decarboxylase 1 (417 aa).

22 to 25 is a binding site for (R)-5-diphosphomevalonate; sequence YWGK. Positions 39–47 match the Peroxisomal targeting signal PTS2 motif; the sequence is RVSLDPDHL. (R)-5-diphosphomevalonate contacts are provided by residues Arg-77, 160–165, and Thr-216; that span reads SGSACR.

The protein belongs to the diphosphomevalonate decarboxylase family. Homodimer.

It localises to the peroxisome. The enzyme catalyses (R)-5-diphosphomevalonate + ATP = isopentenyl diphosphate + ADP + phosphate + CO2. The protein operates within isoprenoid biosynthesis; isopentenyl diphosphate biosynthesis via mevalonate pathway; isopentenyl diphosphate from (R)-mevalonate: step 3/3. Functionally, performs the first committed step in the biosynthesis of isoprene-containing compounds such as sterols and terpenoids. Component of the triterpene saponins (e.g. ginsenosides or panaxosides) and phytosterols biosynthetic pathways. Catalyzes the conversion of mevalonate diphosphate to isopentenyl diphosphate (IPP). The chain is Diphosphomevalonate decarboxylase 1 from Panax ginseng (Korean ginseng).